We begin with the raw amino-acid sequence, 142 residues long: Hemoglobin subunit alpha (142 aa).

The Globin domain occupies 2–142; it reads KLSAEDKHNV…VGHVLTSKYR (141 aa). His59 lines the O2 pocket. His88 is a heme b binding site.

This sequence belongs to the globin family. In terms of assembly, heterotetramer of two alpha chains and two beta chains. Red blood cells.

Its function is as follows. Involved in oxygen transport from the lung to the various peripheral tissues. This chain is Hemoglobin subunit alpha (HBA), found in Taricha granulosa (Roughskin newt).